A 451-amino-acid polypeptide reads, in one-letter code: UDP-N-acetylmuramate--L-alanine ligase (451 aa).

Residue 110-116 participates in ATP binding; it reads GTHGKTT.

It belongs to the MurCDEF family.

It localises to the cytoplasm. It carries out the reaction UDP-N-acetyl-alpha-D-muramate + L-alanine + ATP = UDP-N-acetyl-alpha-D-muramoyl-L-alanine + ADP + phosphate + H(+). The protein operates within cell wall biogenesis; peptidoglycan biosynthesis. Its function is as follows. Cell wall formation. The protein is UDP-N-acetylmuramate--L-alanine ligase of Francisella tularensis subsp. holarctica (strain FTNF002-00 / FTA).